A 414-amino-acid polypeptide reads, in one-letter code: Protein DNA-DAMAGE INDUCIBLE 1 (414 aa).

Residues 1-76 form the Ubiquitin-like domain; it reads MRITVMTAGE…LMMMVSNASS (76 aa). Residues 213-292 form the Peptidase A2 domain; sequence LKAFVDSGAQ…NMEFLFGLDM (80 aa). Aspartate 218 is an active-site residue. Positions 332 to 374 are disordered; the sequence is ERVPNDASSSGATVPSGFTEKKNNTVANPTSQQPKRQNTSEGP. The segment covering 355–372 has biased composition (polar residues); that stretch reads NTVANPTSQQPKRQNTSE. Residues 374–414 form the UBA domain; that stretch reads PEFEAKIAKLVELGFSRDSVIQALKLFEGNEEQAAGFLFGG.

The protein belongs to the DDI1 family. In terms of assembly, homodimer.

It localises to the cytoplasm. The protein resides in the cytosol. In terms of biological role, receptor of ubiquitinated protein targeted to ubiquitin/proteasome-mediated proteolysis (UPP). Relatively weak affinity for both 'Lys-48'- and 'Lys-63'-linked ubiquitin chains with a slight preference for 'Lys-48-'linked chains of three or more ubiquitin units. The chain is Protein DNA-DAMAGE INDUCIBLE 1 from Arabidopsis thaliana (Mouse-ear cress).